The sequence spans 213 residues: Probable GTP-binding protein EngB (213 aa).

One can recognise an EngB-type G domain in the interval 30-204 (EGFEVAFAGR…YTALAGWMEL (175 aa)). GTP-binding positions include 38 to 45 (GRSNAGKS), 64 to 68 (GRTQL), 82 to 85 (DLPG), 149 to 152 (TKAD), and 182 to 185 (LFSA). Mg(2+)-binding residues include serine 45 and threonine 66.

This sequence belongs to the TRAFAC class TrmE-Era-EngA-EngB-Septin-like GTPase superfamily. EngB GTPase family. The cofactor is Mg(2+).

Its function is as follows. Necessary for normal cell division and for the maintenance of normal septation. The polypeptide is Probable GTP-binding protein EngB (Pseudomonas fluorescens (strain SBW25)).